A 121-amino-acid polypeptide reads, in one-letter code: uncharacterized protein (121 aa).

To E.coli YcjD and H.influenzae HI_1162.

This is an uncharacterized protein from Haemophilus influenzae (strain ATCC 51907 / DSM 11121 / KW20 / Rd).